Consider the following 299-residue polypeptide: MLSAGLGLLMLVAVIEFLIGLIGNGILVVWSLREWIRKFSWSSYNLIILGLAGCRFLLQWLIILDLSLFPLFQSSSWLRYLNVFWVLVSQASLWFATFLSVFYCKKITTFDRPAYLWLKQRAYNLSLWCLLGYFIISLLLTVQVGLTVHHPPQGNSSIRYPFEHWQYLYVFQLNSGSYLPLMVFLVSSGMLIISLYTHHKKMKVHSAGRRDARAKAHITALKSLGCFLLLHLVYIVASPFSITSKTYPPDLTSVFIWETLMAAYPSLHSLMLIMGIPRVKQTCQKILWKTVCARRCWGP.

A topological domain (extracellular) is located at residue Met-1. The chain crosses the membrane as a helical span at residues 2 to 22 (LSAGLGLLMLVAVIEFLIGLI). At 23 to 45 (GNGILVVWSLREWIRKFSWSSYN) the chain is on the cytoplasmic side. A helical transmembrane segment spans residues 46 to 66 (LIILGLAGCRFLLQWLIILDL). Over 67-82 (SLFPLFQSSSWLRYLN) the chain is Extracellular. The helical transmembrane segment at 83-103 (VFWVLVSQASLWFATFLSVFY) threads the bilayer. The Cytoplasmic segment spans residues 104 to 127 (CKKITTFDRPAYLWLKQRAYNLSL). A helical transmembrane segment spans residues 128–148 (WCLLGYFIISLLLTVQVGLTV). Topologically, residues 149–175 (HHPPQGNSSIRYPFEHWQYLYVFQLNS) are extracellular. Asn-155 is a glycosylation site (N-linked (GlcNAc...) asparagine). Residues 176 to 196 (GSYLPLMVFLVSSGMLIISLY) traverse the membrane as a helical segment. The Cytoplasmic portion of the chain corresponds to 197–223 (THHKKMKVHSAGRRDARAKAHITALKS). The helical transmembrane segment at 224 to 244 (LGCFLLLHLVYIVASPFSITS) threads the bilayer. The Extracellular segment spans residues 245 to 253 (KTYPPDLTS). A helical transmembrane segment spans residues 254 to 274 (VFIWETLMAAYPSLHSLMLIM). Topologically, residues 275-299 (GIPRVKQTCQKILWKTVCARRCWGP) are cytoplasmic.

Belongs to the G-protein coupled receptor T2R family.

The protein resides in the membrane. In terms of biological role, receptor that may play a role in the perception of bitterness and is gustducin-linked. May play a role in sensing the chemical composition of the gastrointestinal content. The activity of this receptor may stimulate alpha gustducin, mediate PLC-beta-2 activation and lead to the gating of TRPM5. The sequence is that of Taste receptor type 2 member 5 (TAS2R5) from Papio hamadryas (Hamadryas baboon).